A 140-amino-acid chain; its full sequence is Transmembrane protein 234 (140 aa).

The next 3 membrane-spanning stretches (helical) occupy residues 1–21 (MAAS…WGGT), 82–102 (LAVP…GKVL), and 111–131 (AVAG…SSVS).

The protein belongs to the TMEM234 family.

It localises to the membrane. This chain is Transmembrane protein 234 (Tmem234), found in Mus musculus (Mouse).